Consider the following 84-residue polypeptide: Large ribosomal subunit protein bL27 (84 aa).

The interval 1–20 (MAHKKAGGSTRNGRDSNPKY) is disordered.

It belongs to the bacterial ribosomal protein bL27 family.

This is Large ribosomal subunit protein bL27 from Francisella tularensis subsp. tularensis (strain FSC 198).